Here is a 186-residue protein sequence, read N- to C-terminus: Elongation factor P (186 aa).

This sequence belongs to the elongation factor P family.

The protein localises to the cytoplasm. The protein operates within protein biosynthesis; polypeptide chain elongation. In terms of biological role, involved in peptide bond synthesis. Stimulates efficient translation and peptide-bond synthesis on native or reconstituted 70S ribosomes in vitro. Probably functions indirectly by altering the affinity of the ribosome for aminoacyl-tRNA, thus increasing their reactivity as acceptors for peptidyl transferase. The polypeptide is Elongation factor P (Mycoplasmopsis synoviae (strain 53) (Mycoplasma synoviae)).